The primary structure comprises 426 residues: Glutamate-1-semialdehyde 2,1-aminomutase (426 aa).

Lys-265 carries the N6-(pyridoxal phosphate)lysine modification.

This sequence belongs to the class-III pyridoxal-phosphate-dependent aminotransferase family. HemL subfamily. As to quaternary structure, homodimer. Pyridoxal 5'-phosphate serves as cofactor.

It is found in the cytoplasm. It carries out the reaction (S)-4-amino-5-oxopentanoate = 5-aminolevulinate. Its pathway is porphyrin-containing compound metabolism; protoporphyrin-IX biosynthesis; 5-aminolevulinate from L-glutamyl-tRNA(Glu): step 2/2. In Escherichia coli (strain K12 / DH10B), this protein is Glutamate-1-semialdehyde 2,1-aminomutase.